Consider the following 303-residue polypeptide: Endo-1,3;1,4-beta-D-glucanase (303 aa).

An N-terminal signal peptide occupies residues 1 to 43 (MPSSAQVLLCLAAVLAAAAATTAEAHSQCLDNPPDRSIHGRQL). Asn115, Asn197, and Asn257 each carry an N-linked (GlcNAc...) asparagine glycan.

Post-translationally, glycosylated.

The protein resides in the secreted. In terms of biological role, plays a role in control of plant growth. Mediates specific degradation of cell wall (1,3)(1,4)-beta-D-glucans and is related to auxin-mediated growth and development of cereal coleoptiles. The protein is Endo-1,3;1,4-beta-D-glucanase of Zea mays (Maize).